The following is a 249-amino-acid chain: Putative S-adenosyl-L-methionine-dependent methyltransferase Mjls_0570 (249 aa).

S-adenosyl-L-methionine contacts are provided by residues Asp111 and 141 to 142; that span reads DL.

This sequence belongs to the UPF0677 family.

Exhibits S-adenosyl-L-methionine-dependent methyltransferase activity. This Mycobacterium sp. (strain JLS) protein is Putative S-adenosyl-L-methionine-dependent methyltransferase Mjls_0570.